We begin with the raw amino-acid sequence, 139 residues long: Prefoldin subunit alpha (139 aa).

This sequence belongs to the prefoldin subunit alpha family. As to quaternary structure, heterohexamer of two alpha and four beta subunits.

It is found in the cytoplasm. Functionally, molecular chaperone capable of stabilizing a range of proteins. Seems to fulfill an ATP-independent, HSP70-like function in archaeal de novo protein folding. The protein is Prefoldin subunit alpha of Picrophilus torridus (strain ATCC 700027 / DSM 9790 / JCM 10055 / NBRC 100828 / KAW 2/3).